Here is a 214-residue protein sequence, read N- to C-terminus: dITP/XTP pyrophosphatase (214 aa).

16 to 21 (THNPGK) contacts substrate. Mg(2+) is bound by residues Asp48 and Asp77. The Proton acceptor role is filled by Asp77. Residues Ser78, 163-166 (FGYD), Lys186, and 198-199 (HR) each bind substrate.

The protein belongs to the HAM1 NTPase family. As to quaternary structure, homodimer. The cofactor is Mg(2+).

It carries out the reaction XTP + H2O = XMP + diphosphate + H(+). It catalyses the reaction dITP + H2O = dIMP + diphosphate + H(+). The catalysed reaction is ITP + H2O = IMP + diphosphate + H(+). In terms of biological role, pyrophosphatase that catalyzes the hydrolysis of nucleoside triphosphates to their monophosphate derivatives, with a high preference for the non-canonical purine nucleotides XTP (xanthosine triphosphate), dITP (deoxyinosine triphosphate) and ITP. Seems to function as a house-cleaning enzyme that removes non-canonical purine nucleotides from the nucleotide pool, thus preventing their incorporation into DNA/RNA and avoiding chromosomal lesions. The polypeptide is dITP/XTP pyrophosphatase (Bradyrhizobium sp. (strain BTAi1 / ATCC BAA-1182)).